The primary structure comprises 306 residues: Armadillo repeat-containing protein 10 (306 aa).

Residues 7–29 (VGWVAAGLVLGAGACYCIYRLTR) form a helical membrane-spanning segment. The residue at position 43 (Ser43) is a Phosphoserine. At Thr48 the chain carries Phosphothreonine. The stretch at 101–143 (GGIPIVGSKINSLNQSIKEKALNALNNLSVNVENQTKIKIYVR) is one ARM repeat.

In terms of assembly, interacts with the DNA-binding domain of p53/TP53.

The protein localises to the endoplasmic reticulum membrane. It is found in the mitochondrion outer membrane. Functionally, may play a role in cell survival and cell growth. May suppress the transcriptional activity of p53/TP53. The chain is Armadillo repeat-containing protein 10 (Armc10) from Rattus norvegicus (Rat).